Consider the following 269-residue polypeptide: tRNA uridine(34) hydroxylase (269 aa).

The Rhodanese domain maps to 122-216 (QDPEVVLIDV…YLEAIAPEEN (95 aa)). The Cysteine persulfide intermediate role is filled by C176.

The protein belongs to the TrhO family.

The catalysed reaction is uridine(34) in tRNA + AH2 + O2 = 5-hydroxyuridine(34) in tRNA + A + H2O. Catalyzes oxygen-dependent 5-hydroxyuridine (ho5U) modification at position 34 in tRNAs. The polypeptide is tRNA uridine(34) hydroxylase (Synechococcus elongatus (strain ATCC 33912 / PCC 7942 / FACHB-805) (Anacystis nidulans R2)).